We begin with the raw amino-acid sequence, 638 residues long: Chaperone protein DnaK (638 aa).

At Thr198 the chain carries Phosphothreonine; by autocatalysis. Residues 598 to 638 (YEASQKEAAEADAKADAAKDSDVVDADFEEIDEDDDKKKSA) form a disordered region. Positions 601–619 (SQKEAAEADAKADAAKDSD) are enriched in basic and acidic residues. Positions 620 to 632 (VVDADFEEIDEDD) are enriched in acidic residues.

This sequence belongs to the heat shock protein 70 family.

In terms of biological role, acts as a chaperone. This chain is Chaperone protein DnaK, found in Mesorhizobium japonicum (strain LMG 29417 / CECT 9101 / MAFF 303099) (Mesorhizobium loti (strain MAFF 303099)).